Reading from the N-terminus, the 464-residue chain is tRNA modification GTPase MnmE (464 aa).

R27, E90, and K129 together coordinate (6S)-5-formyl-5,6,7,8-tetrahydrofolate. The 163-residue stretch at 222–384 (GITLVLAGSV…LYDKIRTLIS (163 aa)) folds into the TrmE-type G domain. Residues 232–237 (NAGKSS), 251–257 (SSYPGTT), and 276–279 (DTAG) contribute to the GTP site. Residues S236 and T257 each contribute to the Mg(2+) site. Residue K464 coordinates (6S)-5-formyl-5,6,7,8-tetrahydrofolate.

This sequence belongs to the TRAFAC class TrmE-Era-EngA-EngB-Septin-like GTPase superfamily. TrmE GTPase family. In terms of assembly, homodimer. Heterotetramer of two MnmE and two MnmG subunits. Requires K(+) as cofactor.

It is found in the cytoplasm. Exhibits a very high intrinsic GTPase hydrolysis rate. Involved in the addition of a carboxymethylaminomethyl (cmnm) group at the wobble position (U34) of certain tRNAs, forming tRNA-cmnm(5)s(2)U34. The polypeptide is tRNA modification GTPase MnmE (Borreliella afzelii (strain PKo) (Borrelia afzelii)).